A 953-amino-acid chain; its full sequence is Nucleotide-binding oligomerization domain-containing protein 1 (953 aa).

The CARD domain maps to 15 to 107; the sequence is GCHSHIKLLK…VDLRLWLSEI (93 aa). In terms of domain architecture, NACHT spans 196 to 531; it reads ETVFVFGDAG…AFFTAFFLVA (336 aa). 202-209 lines the ATP pocket; that stretch reads GDAGVGKS. Residues C558 and C567 are each lipidated (S-palmitoyl cysteine). LRR repeat units follow at residues 702 to 725, 727 to 750, 755 to 778, 783 to 806, 839 to 862, 867 to 890, 895 to 918, and 923 to 946; these read FHRQLALDLDNNNLNDYGVQELQP, FSRLTVIRLSVNQITDTGVKVLCE, YKIVTFLGLYNNQITDIGARYVAQ, CRGLKHLKLGKNRITSEGGKCVAL, HPSLTTLSLAFNGISPEGGKSLAQ, NTTLTVIWLTKNELNDESAECFAE, NQTLRHLWLIQNRITAKGTAQLAR, and NTAITEICLNGNLIKPEEAKVFEN. C952 carries the S-palmitoyl cysteine lipid modification.

It belongs to the NOD1-NOD2 family. In terms of assembly, homooligomer: homooligomerizes following ligand-binding, promoting RIPK2 recruitment. Interacts (via CARD domain) with RIPK2 (via CARD domain). Following RIPK2 recruitment, RIPK2 homooligomerizes via its CARD domain and forms long filaments named RIPosomes. Interacts (via CARD domain) with ubiquitin; inhibiting interaction with RIPK2. Interacts with ARHGEF2. Interacts with NLRP10 and recruits it to the cell membrane following invasive bacterial infection. Interacts with IFIH1; this interaction promotes transcription of antiviral genes and inhibition of viral replication. Interacts with Irgm1; promoting NOD1 degradation. Interacts with ATG16L1. Post-translationally, ubiquitinated. 'Lys-48'-linked polyubiquitination by RNF34 promotes proteasomal degradation and thereby negatively regulates NOD1 for instance in NF-kappa-B activation. In terms of processing, palmitoylated. Palmitoylation is required for proper recruitment to the bacterial entry site and hence for proper signaling upon cognate peptidoglycan detection. Degraded via selective autophagy following interaction with Irgm1. Irgm1 promotes NOD1-RIPK2 RIPosome recruitment to autophagosome membranes, promoting their SQSTM1/p62-dependent autophagic degradation. As to expression, although ubiquitously expressed, NOD1 levels are more abundant in immune cells, the gastrointestinal tract, and adipose tissue.

It is found in the cell membrane. Its subcellular location is the apical cell membrane. It localises to the basolateral cell membrane. The protein localises to the cytoplasm. Functionally, pattern recognition receptor (PRR) that detects bacterial peptidoglycan fragments and other danger signals and thus participates in both innate and adaptive immune responses. Specifically recognizes and binds gamma-D-glutamyl-meso-diaminopimelic acid (iE-DAP), a dipeptide present in peptidoglycan of Gram-negative bacteria. Preferentially binds iE-DAP in tetrapeptide-containing muropeptides (MurNAc-TetraDAP or TetraDAP). Ligand binding triggers oligomerization that facilitates the binding and subsequent activation of the proximal adapter receptor-interacting RIPK2. Following recruitment, RIPK2 undergoes 'Met-1'- (linear) and 'Lys-63'-linked polyubiquitination by E3 ubiquitin-protein ligases XIAP, BIRC2, BIRC3 and the LUBAC complex, becoming a scaffolding protein for downstream effectors, triggering activation of the NF-kappa-B and MAP kinases signaling. This in turn leads to the transcriptional activation of hundreds of genes involved in immune response. Also acts as a regulator of antiviral response elicited by dsRNA and the expression of RLR pathway members by targeting IFIH1 and TRAF3 to modulate the formation of IFIH1-MAVS and TRAF3-MAVS complexes leading to increased transcription of type I IFNs. Also acts as a regulator of autophagy via its interaction with ATG16L1, possibly by recruiting ATG16L1 at the site of bacterial entry. Besides recognizing pathogens, also involved in the endoplasmic reticulum stress response: acts by sensing and binding to the cytosolic metabolite sphingosine-1-phosphate generated in response to endoplasmic reticulum stress, initiating an inflammation process that leads to activation of the NF-kappa-B and MAP kinases signaling. In addition, plays a role in insulin trafficking in beta cells in a cell-autonomous manner. Mechanistically, upon recognizing cognate ligands, NOD1 and RIPK2 localize to insulin vesicles where they recruit RAB1A to direct insulin trafficking through the cytoplasm. This chain is Nucleotide-binding oligomerization domain-containing protein 1, found in Mus musculus (Mouse).